A 505-amino-acid chain; its full sequence is Light-independent protochlorophyllide reductase subunit B (505 aa).

A [4Fe-4S] cluster-binding site is contributed by Asp36. Asp291 acts as the Proton donor in catalysis. Residue 426-427 (GM) coordinates substrate.

This sequence belongs to the ChlB/BchB/BchZ family. In terms of assembly, protochlorophyllide reductase is composed of three subunits; ChlL, ChlN and ChlB. Forms a heterotetramer of two ChlB and two ChlN subunits. Requires [4Fe-4S] cluster as cofactor.

The enzyme catalyses chlorophyllide a + oxidized 2[4Fe-4S]-[ferredoxin] + 2 ADP + 2 phosphate = protochlorophyllide a + reduced 2[4Fe-4S]-[ferredoxin] + 2 ATP + 2 H2O. The protein operates within porphyrin-containing compound metabolism; chlorophyll biosynthesis (light-independent). Component of the dark-operative protochlorophyllide reductase (DPOR) that uses Mg-ATP and reduced ferredoxin to reduce ring D of protochlorophyllide (Pchlide) to form chlorophyllide a (Chlide). This reaction is light-independent. The NB-protein (ChlN-ChlB) is the catalytic component of the complex. This Gloeobacter violaceus (strain ATCC 29082 / PCC 7421) protein is Light-independent protochlorophyllide reductase subunit B.